A 261-amino-acid chain; its full sequence is (R)-S-adenosyl-L-methionine hydrolase (261 aa).

Adenosine is bound by residues D12, D72, and N187. The (R)-S-adenosyl-L-methionine site is built by N187, S231, and V239. Residue V239 participates in adenosine binding.

It belongs to the SAM hydrolase / SAM-dependent halogenase family.

It carries out the reaction (R)-S-adenosyl-L-methionine + H2O = adenosine + L-methionine + H(+). In terms of biological role, specifically hydrolyzes (R)-S-adenosyl-L-methionine ((R)-SAM), the inactive form of the ubiquitous cofactor SAM, into adenosine and L-methionine. Is stereoselective as it cannot use the active form of SAM, (S)-S-adenosyl-L-methionine, as substrate. Likely plays a role in preventing accumulation of (R)-S-adenosyl-L-methionine in cells; maintenance of (S)-S-denosyl-L-methionine homochirality is important for cellular health given that the (R)-form is largely inactive as a methyl donor and can function as an inhibitor of methyltransferases. This chain is (R)-S-adenosyl-L-methionine hydrolase, found in Salinispora tropica (strain ATCC BAA-916 / DSM 44818 / JCM 13857 / NBRC 105044 / CNB-440).